Reading from the N-terminus, the 315-residue chain is tRNA dimethylallyltransferase (315 aa).

14–21 is a binding site for ATP; sequence GPTASGKT. A substrate-binding site is contributed by 16–21; that stretch reads TASGKT. Interaction with substrate tRNA stretches follow at residues 39–42, 163–167, and 248–253; these read DSAL, QRIQR, and RCVGYR.

The protein belongs to the IPP transferase family. Monomer. The cofactor is Mg(2+).

It carries out the reaction adenosine(37) in tRNA + dimethylallyl diphosphate = N(6)-dimethylallyladenosine(37) in tRNA + diphosphate. Its function is as follows. Catalyzes the transfer of a dimethylallyl group onto the adenine at position 37 in tRNAs that read codons beginning with uridine, leading to the formation of N6-(dimethylallyl)adenosine (i(6)A). This Paraburkholderia phytofirmans (strain DSM 17436 / LMG 22146 / PsJN) (Burkholderia phytofirmans) protein is tRNA dimethylallyltransferase.